A 219-amino-acid polypeptide reads, in one-letter code: MASTGLQILGIVLTLLGWVNALVSCALPMWKVTAFIGNSIVVAQMVWEGLWMSCVVQSTGQMQCKVYDSLLALPQDLQAARALCVVTLLIVLLGLLVYLAGAKCTTCVEDRNSKSRLVLISGIIFVISGVLTLIPVCWTAHSIIQDFYNPLVADAQKRELGASLYLGWAASGLLLLGGGLLCCACSSGGTQGPRHYMACYSTSVPHSRGPSEYPTKNYV.

Topologically, residues 1–7 are cytoplasmic; it reads MASTGLQ. Residues 8 to 28 form a helical membrane-spanning segment; sequence ILGIVLTLLGWVNALVSCALP. The Extracellular portion of the chain corresponds to 29 to 81; it reads MWKVTAFIGNSIVVAQMVWEGLWMSCVVQSTGQMQCKVYDSLLALPQDLQAAR. The chain crosses the membrane as a helical span at residues 82–102; sequence ALCVVTLLIVLLGLLVYLAGA. Topologically, residues 103–116 are cytoplasmic; it reads KCTTCVEDRNSKSR. Residues 117–137 form a helical membrane-spanning segment; sequence LVLISGIIFVISGVLTLIPVC. Residues 138 to 163 are Extracellular-facing; it reads WTAHSIIQDFYNPLVADAQKRELGAS. The helical transmembrane segment at 164–184 threads the bilayer; sequence LYLGWAASGLLLLGGGLLCCA. Residues 185-219 lie on the Cytoplasmic side of the membrane; the sequence is CSSGGTQGPRHYMACYSTSVPHSRGPSEYPTKNYV. Residues serine 201, serine 203, serine 207, and serine 211 each carry the phosphoserine modification. Positions 218 to 219 are interactions with TJP1, TJP2 and TJP3; the sequence is YV.

It belongs to the claudin family. In terms of assembly, directly interacts with TJP1/ZO-1, TJP2/ZO-2 and TJP3/ZO-3. Interacts with CLDN1, CD81 and OCLN. In terms of tissue distribution, expressed mostly in embryonic tissues.

Its subcellular location is the cell junction. It localises to the tight junction. The protein localises to the cell membrane. Its function is as follows. Plays a major role in tight junction-specific obliteration of the intercellular space, through calcium-independent cell-adhesion activity. The chain is Claudin-6 (Cldn6) from Mus musculus (Mouse).